Consider the following 596-residue polypeptide: MPKRTLEDTELNPRDNYIKVSSKKSRKEKREKKSKDAEEPATDSTPIDIEVESKEARRERKRLKKAKRAQEAEEEQLPEGNAIESTSDADAAACIKAAKKAEKARLKALKKEGKEEKVDIPESTDSATPISVAPQQNGTTYTEDYNLSGLPQSEIDSFLTTNFITITDPLSASAALRPLIKFDYLPITDSAQRAPFKDFKAPTPIQAAAWPFLLAGRDVIGVAETGSGKTMAFAVPCVRYMSSLPKNQKNKGPRAVVVSPTRELAMQSYEQIVKLAKASGLECVCVYGGVPKDEQIRALKTADIVVATPGRLNDLINQGCADLSKARYVVLDEADRMLDKGFEEEIRKIINTTPSLGKRQTLMFTATWPESVRELASTFMTSPVKIAIGDNPTGDLRANSRIVQKVEVVEPRDKEYRLMQLLKQYQSGSQKDDRILVFCLYKKEATRVEGFIRQKGFRVAGIHGDLSQEQRTRSLEAFKSGNTPVLVATDVAARGLDIPAVKLVINCTFPLTVEDYVHRIGRTGRAGKDGLAITLFTEHDKAQSGALINVLKAANQPVPDELLKFGTTVKKKAHDAYGAFFKNVDTTKKATKITFD.

Residues methionine 1–tyrosine 17 are compositionally biased toward basic and acidic residues. Disordered stretches follow at residues methionine 1 to serine 87 and glutamate 115 to threonine 139. The span at serine 21–arginine 30 shows a compositional bias: basic residues. Residues isoleucine 47–isoleucine 120 are a coiled coil. Over residues serine 123 to threonine 139 the composition is skewed to polar residues. The short motif at isoleucine 180–alanine 207 is the Q motif element. Positions tryptophan 210–isoleucine 386 constitute a Helicase ATP-binding domain. Position 223–230 (alanine 223–threonine 230) interacts with ATP. The short motif at aspartate 332 to aspartate 335 is the DEAD box element. Residues arginine 417–glycine 566 form the Helicase C-terminal domain.

It belongs to the DEAD box helicase family. DDX5/DBP2 subfamily.

The protein localises to the nucleus. The protein resides in the nucleolus. The catalysed reaction is ATP + H2O = ADP + phosphate + H(+). Functionally, ATP-dependent RNA helicase required for 60S ribosomal subunit synthesis. Involved in efficient pre-rRNA processing, predominantly at site A3, which is necessary for the normal formation of 25S and 5.8S rRNAs. In Sclerotinia sclerotiorum (strain ATCC 18683 / 1980 / Ss-1) (White mold), this protein is ATP-dependent RNA helicase dbp3 (dbp3).